Reading from the N-terminus, the 129-residue chain is Serum amyloid A protein (129 aa).

The first 18 residues, 1–18, serve as a signal peptide directing secretion; the sequence is MKLFTGLVFCSLVLGVSS. A Pyrrolidone carboxylic acid modification is found at Gln19. Positions 88–129 are disordered; it reads FFRHGNSGHGAEDSKADQAANEWGRSGKDPNHFRPAGLPSKY. A propeptide spans 112–129 (often cleaved during amyloidogenesis); that stretch reads RSGKDPNHFRPAGLPSKY.

This sequence belongs to the SAA family. Expressed by the liver; secreted in plasma.

Its subcellular location is the secreted. Its function is as follows. Major acute phase reactant. Apolipoprotein of the HDL complex. This chain is Serum amyloid A protein (SAA1), found in Felis catus (Cat).